Consider the following 507-residue polypeptide: ATP synthase subunit alpha, chloroplastic (507 aa).

170 to 177 provides a ligand contact to ATP; the sequence is GDRQTGKT.

This sequence belongs to the ATPase alpha/beta chains family. F-type ATPases have 2 components, CF(1) - the catalytic core - and CF(0) - the membrane proton channel. CF(1) has five subunits: alpha(3), beta(3), gamma(1), delta(1), epsilon(1). CF(0) has four main subunits: a, b, b' and c.

It is found in the plastid. The protein resides in the chloroplast thylakoid membrane. The catalysed reaction is ATP + H2O + 4 H(+)(in) = ADP + phosphate + 5 H(+)(out). Produces ATP from ADP in the presence of a proton gradient across the membrane. The alpha chain is a regulatory subunit. The protein is ATP synthase subunit alpha, chloroplastic of Phalaenopsis aphrodite subsp. formosana (Moth orchid).